Here is a 261-residue protein sequence, read N- to C-terminus: uncharacterized protein (261 aa).

The N-terminal stretch at 1–22 (MGYLKKVGMCISLLIVIIFVTS) is a signal peptide. The N-palmitoyl cysteine moiety is linked to residue Cys-23. Cys-23 is lipidated: S-diacylglycerol cysteine.

Belongs to the staphylococcal tandem lipoprotein family.

The protein localises to the cell membrane. This is an uncharacterized protein from Staphylococcus aureus (strain bovine RF122 / ET3-1).